The following is a 630-amino-acid chain: Biosynthetic arginine decarboxylase (630 aa).

Position 99 is an N6-(pyridoxal phosphate)lysine (Lys99). 281–291 serves as a coordination point for substrate; sequence VDIGGGLGVDY.

This sequence belongs to the Orn/Lys/Arg decarboxylase class-II family. SpeA subfamily. The cofactor is Mg(2+). It depends on pyridoxal 5'-phosphate as a cofactor.

The catalysed reaction is L-arginine + H(+) = agmatine + CO2. Its function is as follows. Catalyzes the biosynthesis of agmatine from arginine. This is Biosynthetic arginine decarboxylase from Bacteroides thetaiotaomicron (strain ATCC 29148 / DSM 2079 / JCM 5827 / CCUG 10774 / NCTC 10582 / VPI-5482 / E50).